The chain runs to 101 residues: MHGKYPTLKDIVLELTPDPVGLHCNEQLDSSEDEVDEQATQATQATQHSTLLQCYQILTSCSKCCSNVRLVVECTGPDIHDLHDLLLGTLNIVCPLCAPKS.

The tract at residues 1–40 is E7 terminal domain; the sequence is MHGKYPTLKDIVLELTPDPVGLHCNEQLDSSEDEVDEQAT. The LXCXE motif; interaction with host RB1 and TMEM173/STING signature appears at 22-26; sequence LHCNE. A zinc finger spans residues 61 to 97; it reads CSKCCSNVRLVVECTGPDIHDLHDLLLGTLNIVCPLC. The Nuclear export signal signature appears at 79–87; the sequence is IHDLHDLLL.

Belongs to the papillomaviridae E7 protein family. In terms of assembly, homodimer. Homooligomer. Interacts with host RB1; this interaction induces dissociation of RB1-E2F1 complex thereby disrupting RB1 activity. Interacts with host EP300; this interaction represses EP300 transcriptional activity. Interacts with protein E2; this interaction inhibits E7 oncogenic activity. Interacts with host TMEM173/STING; this interaction impairs the ability of TMEM173/STING to sense cytosolic DNA and promote the production of type I interferon (IFN-alpha and IFN-beta). Post-translationally, highly phosphorylated.

The protein resides in the host cytoplasm. Its subcellular location is the host nucleus. Plays a role in viral genome replication by driving entry of quiescent cells into the cell cycle. Stimulation of progression from G1 to S phase allows the virus to efficiently use the cellular DNA replicating machinery to achieve viral genome replication. E7 protein has both transforming and trans-activating activities. Induces the disassembly of the E2F1 transcription factor from RB1, with subsequent transcriptional activation of E2F1-regulated S-phase genes. Interferes with host histone deacetylation mediated by HDAC1 and HDAC2, leading to transcription activation. Also plays a role in the inhibition of both antiviral and antiproliferative functions of host interferon alpha. Interaction with host TMEM173/STING impairs the ability of TMEM173/STING to sense cytosolic DNA and promote the production of type I interferon (IFN-alpha and IFN-beta). The protein is Protein E7 of Human papillomavirus 13.